The primary structure comprises 546 residues: CTP synthase (546 aa).

Positions 1-265 (MTKYIFVTGG…DDIIAEQLQL (265 aa)) are amidoligase domain. Serine 13 contacts CTP. Serine 13 is a UTP binding site. ATP-binding positions include 14–19 (SLGKGI) and aspartate 71. Positions 71 and 139 each coordinate Mg(2+). CTP contacts are provided by residues 146–148 (DIE), 186–191 (KTKPTQ), and lysine 222. UTP contacts are provided by residues 186–191 (KTKPTQ) and lysine 222. Positions 290–542 (KIAMVGKYVD…VKAALAHQAD (253 aa)) constitute a Glutamine amidotransferase type-1 domain. Residue glycine 351 coordinates L-glutamine. Cysteine 378 (nucleophile; for glutamine hydrolysis) is an active-site residue. Residues 379–382 (LGMQ), glutamate 402, and arginine 469 each bind L-glutamine. Residues histidine 515 and glutamate 517 contribute to the active site.

It belongs to the CTP synthase family. Homotetramer.

The enzyme catalyses UTP + L-glutamine + ATP + H2O = CTP + L-glutamate + ADP + phosphate + 2 H(+). It catalyses the reaction L-glutamine + H2O = L-glutamate + NH4(+). It carries out the reaction UTP + NH4(+) + ATP = CTP + ADP + phosphate + 2 H(+). Its pathway is pyrimidine metabolism; CTP biosynthesis via de novo pathway; CTP from UDP: step 2/2. With respect to regulation, allosterically activated by GTP, when glutamine is the substrate; GTP has no effect on the reaction when ammonia is the substrate. The allosteric effector GTP functions by stabilizing the protein conformation that binds the tetrahedral intermediate(s) formed during glutamine hydrolysis. Inhibited by the product CTP, via allosteric rather than competitive inhibition. In terms of biological role, catalyzes the ATP-dependent amination of UTP to CTP with either L-glutamine or ammonia as the source of nitrogen. Regulates intracellular CTP levels through interactions with the four ribonucleotide triphosphates. This Chromobacterium violaceum (strain ATCC 12472 / DSM 30191 / JCM 1249 / CCUG 213 / NBRC 12614 / NCIMB 9131 / NCTC 9757 / MK) protein is CTP synthase.